Here is a 334-residue protein sequence, read N- to C-terminus: uncharacterized protein (334 aa).

Tyrosine 52 serves as the catalytic Proton donor. A disordered region spans residues 314–334 (LPPPASPNSEPQVTGGCSSMC). A compositionally biased stretch (polar residues) spans 320-334 (PNSEPQVTGGCSSMC).

Belongs to the aldo/keto reductase family.

The protein resides in the cytoplasm. It localises to the nucleus. This is an uncharacterized protein from Schizosaccharomyces pombe (strain 972 / ATCC 24843) (Fission yeast).